The primary structure comprises 520 residues: Kelch domain-containing protein 4 (520 aa).

The span at 1–10 shows a compositional bias: basic residues; it reads MGKKGKKEKK. The segment at 1–33 is disordered; sequence MGKKGKKEKKGRGAEKTAAKMEKKVSKRSRKEE. Residues 11 to 24 are compositionally biased toward basic and acidic residues; sequence GRGAEKTAAKMEKK. Kelch repeat units follow at residues 77–129, 133–187, 188–241, 243–289, and 308–361; these read ELIL…VVPQ, QLWV…AWKR, QLIL…VTPQ, GIVV…MNPS, and QTLF…RRGR. Disordered stretches follow at residues 346-379, 402-431, and 481-520; these read QLKGPKSEKKKRRRGRKEEPEGGSRPACGGAGTQ, LTAPGSAGQPRSEDEDSLEEAGSPAPGPCP, and DPETQEWLEETDSEEDSEEVEGAEGGVDDEDSGEESGAED. 2 positions are modified to phosphoserine: S413 and S418. The stretch at 443 to 494 is one Kelch 6 repeat; sequence VLYVYGGMFEAGDRQVTLSDLHCLDLHRMEAWKALVEMDPETQEWLEETDSE.

The sequence is that of Kelch domain-containing protein 4 (KLHDC4) from Homo sapiens (Human).